A 206-amino-acid polypeptide reads, in one-letter code: LexA repressor (206 aa).

Positions 28 to 48 (RAEIARELGFRSANAAEEHLK) form a DNA-binding region, H-T-H motif. Catalysis depends on for autocatalytic cleavage activity residues Ser-123 and Lys-160.

It belongs to the peptidase S24 family. Homodimer.

The catalysed reaction is Hydrolysis of Ala-|-Gly bond in repressor LexA.. Functionally, represses a number of genes involved in the response to DNA damage (SOS response), including recA and lexA. In the presence of single-stranded DNA, RecA interacts with LexA causing an autocatalytic cleavage which disrupts the DNA-binding part of LexA, leading to derepression of the SOS regulon and eventually DNA repair. The sequence is that of LexA repressor from Vibrio parahaemolyticus serotype O3:K6 (strain RIMD 2210633).